The sequence spans 228 residues: Cytidylate kinase (228 aa).

17 to 25 lines the ATP pocket; it reads GPTASGKGT.

The protein belongs to the cytidylate kinase family. Type 1 subfamily.

The protein localises to the cytoplasm. The enzyme catalyses CMP + ATP = CDP + ADP. It carries out the reaction dCMP + ATP = dCDP + ADP. The protein is Cytidylate kinase of Burkholderia ambifaria (strain ATCC BAA-244 / DSM 16087 / CCUG 44356 / LMG 19182 / AMMD) (Burkholderia cepacia (strain AMMD)).